Here is a 276-residue protein sequence, read N- to C-terminus: Large ribosomal subunit protein uL2 (276 aa).

Disordered stretches follow at residues 14–58 (RNAS…GGGH) and 221–276 (TRGE…KNRK). A compositionally biased stretch (polar residues) spans 16 to 27 (ASVSDFSELTRS). Residues 255–276 (RRPKKASNKMIVRRRPSGKNRK) are compositionally biased toward basic residues.

Belongs to the universal ribosomal protein uL2 family. In terms of assembly, part of the 50S ribosomal subunit. Forms a bridge to the 30S subunit in the 70S ribosome.

In terms of biological role, one of the primary rRNA binding proteins. Required for association of the 30S and 50S subunits to form the 70S ribosome, for tRNA binding and peptide bond formation. It has been suggested to have peptidyltransferase activity; this is somewhat controversial. Makes several contacts with the 16S rRNA in the 70S ribosome. This is Large ribosomal subunit protein uL2 from Bifidobacterium longum subsp. infantis (strain ATCC 15697 / DSM 20088 / JCM 1222 / NCTC 11817 / S12).